The primary structure comprises 150 residues: Oleosin Ara h 10.0102 (150 aa).

Transmembrane regions (helical) follow at residues 39-59 (VIAV…AGLA) and 73-93 (LFIL…LSVA).

This sequence belongs to the oleosin family. Expressed in seeds (at protein level).

The protein resides in the lipid droplet. It localises to the membrane. May have a structural role to stabilize the lipid body during desiccation of the seed by preventing coalescence of the oil. Probably interacts with both lipid and phospholipid moieties of lipid bodies. May also provide recognition signals for specific lipase anchorage in lipolysis during seedling growth. This is Oleosin Ara h 10.0102 from Arachis hypogaea (Peanut).